The sequence spans 292 residues: Formamidopyrimidine-DNA glycosylase (292 aa).

The active-site Schiff-base intermediate with DNA is proline 2. Glutamate 3 functions as the Proton donor in the catalytic mechanism. Catalysis depends on lysine 60, which acts as the Proton donor; for beta-elimination activity. Residues histidine 109, arginine 128, and lysine 173 each coordinate DNA. The FPG-type zinc finger occupies 258 to 292 (NVYRRTGKKCRQCKNLIERQKISGRSTHWCRKCQK). The active-site Proton donor; for delta-elimination activity is the arginine 282.

Belongs to the FPG family. As to quaternary structure, monomer. It depends on Zn(2+) as a cofactor.

The catalysed reaction is Hydrolysis of DNA containing ring-opened 7-methylguanine residues, releasing 2,6-diamino-4-hydroxy-5-(N-methyl)formamidopyrimidine.. The enzyme catalyses 2'-deoxyribonucleotide-(2'-deoxyribose 5'-phosphate)-2'-deoxyribonucleotide-DNA = a 3'-end 2'-deoxyribonucleotide-(2,3-dehydro-2,3-deoxyribose 5'-phosphate)-DNA + a 5'-end 5'-phospho-2'-deoxyribonucleoside-DNA + H(+). In terms of biological role, involved in base excision repair of DNA damaged by oxidation or by mutagenic agents. Acts as a DNA glycosylase that recognizes and removes damaged bases. Has a preference for oxidized purines, such as 7,8-dihydro-8-oxoguanine (8-oxoG). Has AP (apurinic/apyrimidinic) lyase activity and introduces nicks in the DNA strand. Cleaves the DNA backbone by beta-delta elimination to generate a single-strand break at the site of the removed base with both 3'- and 5'-phosphates. The sequence is that of Formamidopyrimidine-DNA glycosylase from Prochlorococcus marinus subsp. pastoris (strain CCMP1986 / NIES-2087 / MED4).